The sequence spans 116 residues: Flagellar transcriptional regulator FlhD (116 aa).

Belongs to the FlhD family. As to quaternary structure, homodimer; disulfide-linked. Forms a heterohexamer composed of two FlhC and four FlhD subunits. Each FlhC binds a FlhD dimer, forming a heterotrimer, and a hexamer assembles by dimerization of two heterotrimers.

The protein resides in the cytoplasm. Functionally, functions in complex with FlhC as a master transcriptional regulator that regulates transcription of several flagellar and non-flagellar operons by binding to their promoter region. Activates expression of class 2 flagellar genes, including fliA, which is a flagellum-specific sigma factor that turns on the class 3 genes. Also regulates genes whose products function in a variety of physiological pathways. The chain is Flagellar transcriptional regulator FlhD from Yersinia pseudotuberculosis serotype O:1b (strain IP 31758).